The sequence spans 592 residues: Proteasome-associated ATPase (592 aa).

The segment covering 1–11 has biased composition (acidic residues); the sequence is MTGYDSSEEAE. A disordered region spans residues 1 to 24; that stretch reads MTGYDSSEEAERDSSPADGYRQTP. A coiled-coil region spans residues 25–99; that stretch reads AQLSAQIRVL…LKEEVDRLAQ (75 aa). 281-286 provides a ligand contact to ATP; sequence GCGKTL. The interval 591-592 is docks into pockets in the proteasome alpha-ring; sequence YL.

This sequence belongs to the AAA ATPase family. Homohexamer. Assembles into a hexameric ring structure that caps the 20S proteasome core. Strongly interacts with the prokaryotic ubiquitin-like protein Pup through a hydrophobic interface; the interacting region of ARC lies in its N-terminal coiled-coil domain. There is one Pup binding site per ARC hexamer ring. Upon ATP-binding, the C-terminus of ARC interacts with the alpha-rings of the proteasome core, possibly by binding to the intersubunit pockets.

Its pathway is protein degradation; proteasomal Pup-dependent pathway. ATPase which is responsible for recognizing, binding, unfolding and translocation of pupylated proteins into the bacterial 20S proteasome core particle. May be essential for opening the gate of the 20S proteasome via an interaction with its C-terminus, thereby allowing substrate entry and access to the site of proteolysis. Thus, the C-termini of the proteasomal ATPase may function like a 'key in a lock' to induce gate opening and therefore regulate proteolysis. The polypeptide is Proteasome-associated ATPase (Nakamurella multipartita (strain ATCC 700099 / DSM 44233 / CIP 104796 / JCM 9543 / NBRC 105858 / Y-104) (Microsphaera multipartita)).